The following is a 542-amino-acid chain: Putative cysteine ligase BshC (542 aa).

The stretch at 458–487 (VAKNAAIIQAQIEFLQQTLERALLSKHEVE) forms a coiled coil.

It belongs to the BshC family.

In terms of biological role, involved in bacillithiol (BSH) biosynthesis. May catalyze the last step of the pathway, the addition of cysteine to glucosamine malate (GlcN-Mal) to generate BSH. The protein is Putative cysteine ligase BshC of Geobacillus thermodenitrificans (strain NG80-2).